Reading from the N-terminus, the 165-residue chain is Crossover junction endodeoxyribonuclease RuvC (165 aa).

Catalysis depends on residues Asp7, Glu67, and Asp140. 3 residues coordinate Mg(2+): Asp7, Glu67, and Asp140.

This sequence belongs to the RuvC family. As to quaternary structure, homodimer which binds Holliday junction (HJ) DNA. The HJ becomes 2-fold symmetrical on binding to RuvC with unstacked arms; it has a different conformation from HJ DNA in complex with RuvA. In the full resolvosome a probable DNA-RuvA(4)-RuvB(12)-RuvC(2) complex forms which resolves the HJ. It depends on Mg(2+) as a cofactor.

Its subcellular location is the cytoplasm. It carries out the reaction Endonucleolytic cleavage at a junction such as a reciprocal single-stranded crossover between two homologous DNA duplexes (Holliday junction).. Functionally, the RuvA-RuvB-RuvC complex processes Holliday junction (HJ) DNA during genetic recombination and DNA repair. Endonuclease that resolves HJ intermediates. Cleaves cruciform DNA by making single-stranded nicks across the HJ at symmetrical positions within the homologous arms, yielding a 5'-phosphate and a 3'-hydroxyl group; requires a central core of homology in the junction. The consensus cleavage sequence is 5'-(A/T)TT(C/G)-3'. Cleavage occurs on the 3'-side of the TT dinucleotide at the point of strand exchange. HJ branch migration catalyzed by RuvA-RuvB allows RuvC to scan DNA until it finds its consensus sequence, where it cleaves and resolves the cruciform DNA. This is Crossover junction endodeoxyribonuclease RuvC from Halothermothrix orenii (strain H 168 / OCM 544 / DSM 9562).